Here is a 223-residue protein sequence, read N- to C-terminus: PKHD-type hydroxylase syc1482_d (223 aa).

The Fe2OG dioxygenase domain maps to 78–176 (RVHSLLFSRY…RFACVGWVQS (99 aa)). Fe cation contacts are provided by His96, Asp98, and His157. Residue Arg167 participates in 2-oxoglutarate binding.

The cofactor is Fe(2+). L-ascorbate serves as cofactor.

The polypeptide is PKHD-type hydroxylase syc1482_d (Synechococcus sp. (strain ATCC 27144 / PCC 6301 / SAUG 1402/1) (Anacystis nidulans)).